A 578-amino-acid polypeptide reads, in one-letter code: Zinc finger protein with KRAB and SCAN domains 8 (578 aa).

A disordered region spans residues 1–20; sequence MAEESRKPSAPSPPDQTPEE. Ser12 carries the phosphoserine modification. A Glycyl lysine isopeptide (Lys-Gly) (interchain with G-Cter in SUMO2) cross-link involves residue Lys26. One can recognise an SCAN box domain in the interval 51–133; it reads RLRFRQLRYQ…TLLEDLERQI (83 aa). The tract at residues 158–205 is disordered; the sequence is ASAPEPPNTQLQSEATQHKSPVPQESQERAMSTSQSPTRSQKGSSGDQ. The span at 165 to 205 shows a compositional bias: polar residues; sequence NTQLQSEATQHKSPVPQESQERAMSTSQSPTRSQKGSSGDQ. Glycyl lysine isopeptide (Lys-Gly) (interchain with G-Cter in SUMO2) cross-links involve residues Lys176 and Lys199. Ser201 carries the phosphoserine modification. The region spanning 220 to 316 is the KRAB domain; sequence EKIEDMAVSL…GRLERQRGNP (97 aa). Glycyl lysine isopeptide (Lys-Gly) (interchain with G-Cter in SUMO2) cross-links involve residues Lys221, Lys272, and Lys288. 2 C2H2-type zinc fingers span residues 322 to 344 and 350 to 372; these read HKCD…WRIH and YQCN…QDIH. Residues Lys374 and Lys376 each participate in a glycyl lysine isopeptide (Lys-Gly) (interchain with G-Cter in SUMO2) cross-link. 7 consecutive C2H2-type zinc fingers follow at residues 378–400, 406–428, 434–456, 462–484, 490–512, 518–540, and 546–568; these read YHCK…QRIH, YQCN…QRIH, YECN…QRIH, YECD…QRSH, YKCN…QRIH, and YKCK…LRIH. Residues Lys413 and Lys441 each participate in a glycyl lysine isopeptide (Lys-Gly) (interchain with G-Cter in SUMO2) cross-link. Lys502 participates in a covalent cross-link: Glycyl lysine isopeptide (Lys-Gly) (interchain with G-Cter in SUMO2). Lys572 is covalently cross-linked (Glycyl lysine isopeptide (Lys-Gly) (interchain with G-Cter in SUMO2)).

Belongs to the krueppel C2H2-type zinc-finger protein family.

It localises to the nucleus. May be involved in transcriptional regulation. The sequence is that of Zinc finger protein with KRAB and SCAN domains 8 (ZKSCAN8) from Homo sapiens (Human).